Consider the following 130-residue polypeptide: Small ribosomal subunit protein uS11c (130 aa).

This sequence belongs to the universal ribosomal protein uS11 family. Part of the 30S ribosomal subunit.

Its subcellular location is the plastid. It is found in the chloroplast. In Tetradesmus obliquus (Green alga), this protein is Small ribosomal subunit protein uS11c.